Reading from the N-terminus, the 629-residue chain is Rho GTPase-activating protein conundrum (629 aa).

The required for interaction with Moe stretch occupies residues 185 to 294; it reads PPKSGTYADI…CRDSSSLDSC (110 aa). Residues 237 to 261 form a disordered region; it reads SIGRSKESRSENDARSQKKKSSEVL. Over residues 240-258 the composition is skewed to basic and acidic residues; it reads RSKESRSENDARSQKKKSS. Positions 359-565 constitute a Rho-GAP domain; sequence VSINALIRRD…ILILRGEKLF (207 aa).

In terms of assembly, interacts with Moe (via FERM domain).

It localises to the cytoplasm. Its subcellular location is the cell membrane. The protein localises to the cell cortex. It is found in the cell junction. In terms of biological role, GTPase-activating protein (GAP) for Rho1; functions with the ERM protein Moe to regulate Rho1 and control proliferation in the developing epithelium. Recruited by Moe to the cell cortex where it negatively regulates Rho1 activity. Can also promote cell proliferation independently of its GAP activity, perhaps by acting with Arf6 to positively regulate Rac1. This is Rho GTPase-activating protein conundrum from Drosophila melanogaster (Fruit fly).